A 158-amino-acid chain; its full sequence is Large ribosomal subunit protein uL18 (158 aa).

The protein belongs to the universal ribosomal protein uL18 family. Part of the 50S ribosomal subunit. Contacts the 5S and 23S rRNAs.

This is one of the proteins that bind and probably mediate the attachment of the 5S RNA into the large ribosomal subunit, where it forms part of the central protuberance. The polypeptide is Large ribosomal subunit protein uL18 (Picrophilus torridus (strain ATCC 700027 / DSM 9790 / JCM 10055 / NBRC 100828 / KAW 2/3)).